A 428-amino-acid chain; its full sequence is Chaperone SurA (428 aa).

A signal peptide spans 1–20 (MKNWKTLLLGIAMIANTSFA). 2 consecutive PpiC domains span residues 171-272 (STEL…KVND) and 282-382 (VTEV…ELLD).

Its subcellular location is the periplasm. It catalyses the reaction [protein]-peptidylproline (omega=180) = [protein]-peptidylproline (omega=0). Its function is as follows. Chaperone involved in the correct folding and assembly of outer membrane proteins. Recognizes specific patterns of aromatic residues and the orientation of their side chains, which are found more frequently in integral outer membrane proteins. May act in both early periplasmic and late outer membrane-associated steps of protein maturation. In Salmonella choleraesuis (strain SC-B67), this protein is Chaperone SurA.